Here is a 358-residue protein sequence, read N- to C-terminus: DNA integrity scanning protein DisA (358 aa).

The region spanning 9–147 (KQDLSEILQF…ENMKYILKDI (139 aa)) is the DAC domain. Residues G76, L94, and 107-111 (MRHRT) each bind ATP.

It belongs to the DisA family. As to quaternary structure, homooctamer. Mg(2+) serves as cofactor.

It carries out the reaction 2 ATP = 3',3'-c-di-AMP + 2 diphosphate. Functionally, participates in a DNA-damage check-point that is active prior to asymmetric division when DNA is damaged. DisA forms globular foci that rapidly scan along the chromosomes during sporulation, searching for lesions. When a lesion is present, DisA pauses at the lesion site. This triggers a cellular response that culminates in a temporary block in sporulation initiation. Its function is as follows. Also has diadenylate cyclase activity, catalyzing the condensation of 2 ATP molecules into cyclic di-AMP (c-di-AMP). c-di-AMP acts as a signaling molecule that couples DNA integrity with progression of sporulation. The rise in c-di-AMP level generated by DisA while scanning the chromosome, operates as a positive signal that advances sporulation; upon encountering a lesion, the DisA focus arrests at the damaged site and halts c-di-AMP synthesis. This Bacillus licheniformis (strain ATCC 14580 / DSM 13 / JCM 2505 / CCUG 7422 / NBRC 12200 / NCIMB 9375 / NCTC 10341 / NRRL NRS-1264 / Gibson 46) protein is DNA integrity scanning protein DisA.